The sequence spans 127 residues: Glycine cleavage system H protein (127 aa).

The 83-residue stretch at 22 to 104 (EVVIGITHFA…YEGAWMVKVE (83 aa)) folds into the Lipoyl-binding domain. N6-lipoyllysine is present on Lys63.

It belongs to the GcvH family. The glycine cleavage system is composed of four proteins: P, T, L and H. (R)-lipoate is required as a cofactor.

Its function is as follows. The glycine cleavage system catalyzes the degradation of glycine. The H protein shuttles the methylamine group of glycine from the P protein to the T protein. Is also involved in protein lipoylation via its role as an octanoyl/lipoyl carrier protein intermediate. The sequence is that of Glycine cleavage system H protein from Bacillus cereus (strain G9842).